The chain runs to 343 residues: 4-hydroxy-2-oxovalerate aldolase (343 aa).

Residues 4–254 enclose the Pyruvate carboxyltransferase domain; that stretch reads PRLTDTTLRD…NPGLDVFGLM (251 aa). 12–13 serves as a coordination point for substrate; the sequence is RD. A Mn(2+)-binding site is contributed by Asp13. Catalysis depends on His16, which acts as the Proton acceptor. 2 residues coordinate substrate: Ser166 and His193. Mn(2+) contacts are provided by His193 and His195. Residue Tyr284 participates in substrate binding.

The protein belongs to the 4-hydroxy-2-oxovalerate aldolase family.

It catalyses the reaction (S)-4-hydroxy-2-oxopentanoate = acetaldehyde + pyruvate. The sequence is that of 4-hydroxy-2-oxovalerate aldolase from Chloroflexus aggregans (strain MD-66 / DSM 9485).